The chain runs to 457 residues: Carboxypeptidase N catalytic chain (457 aa).

Positions 1-23 (MPDLPSAFLPLLLLSKFVTPVTF) are cleaved as a signal peptide. One can recognise a Peptidase M14 domain in the interval 24–338 (RHHRYDDLVR…EALIQFLEQV (315 aa)). Cysteine 42 and cysteine 104 form a disulfide bridge. Positions 86, 89, and 216 each coordinate Zn(2+). Cysteine 271 and cysteine 311 are joined by a disulfide. The active-site Proton donor/acceptor is the glutamate 308. 3 O-linked (GalNAc...) threonine glycosylation sites follow: threonine 400, threonine 402, and threonine 409. The disordered stretch occupies residues 418-457 (SSSQVYPVQRAPGRGQGGRAKQPRTSRKKDPATKRHRGPA).

It belongs to the peptidase M14 family. Tetramer of two catalytic chains and two glycosylated inactive chains. Requires Zn(2+) as cofactor. Mainly expressed in liver. Also detected in lung, stomach, intestine, spleen and kidney.

The protein localises to the secreted. It localises to the extracellular space. The catalysed reaction is Release of a C-terminal basic amino acid, preferentially lysine.. Functionally, protects the body from potent vasoactive and inflammatory peptides containing C-terminal Arg or Lys (such as kinins or anaphylatoxins) which are released into the circulation. In Mus musculus (Mouse), this protein is Carboxypeptidase N catalytic chain (Cpn1).